The primary structure comprises 324 residues: uncharacterized protein (324 aa).

It belongs to the mgp1/MG371 family.

This is an uncharacterized protein from Mycoplasma genitalium (strain ATCC 33530 / DSM 19775 / NCTC 10195 / G37) (Mycoplasmoides genitalium).